The chain runs to 233 residues: Biosynthetic peptidoglycan transglycosylase (233 aa).

The chain crosses the membrane as a helical span at residues 17–37; sequence IVLAVLALVILPYALIFFYVL.

The protein belongs to the glycosyltransferase 51 family.

The protein resides in the cell inner membrane. The catalysed reaction is [GlcNAc-(1-&gt;4)-Mur2Ac(oyl-L-Ala-gamma-D-Glu-L-Lys-D-Ala-D-Ala)](n)-di-trans,octa-cis-undecaprenyl diphosphate + beta-D-GlcNAc-(1-&gt;4)-Mur2Ac(oyl-L-Ala-gamma-D-Glu-L-Lys-D-Ala-D-Ala)-di-trans,octa-cis-undecaprenyl diphosphate = [GlcNAc-(1-&gt;4)-Mur2Ac(oyl-L-Ala-gamma-D-Glu-L-Lys-D-Ala-D-Ala)](n+1)-di-trans,octa-cis-undecaprenyl diphosphate + di-trans,octa-cis-undecaprenyl diphosphate + H(+). Its pathway is cell wall biogenesis; peptidoglycan biosynthesis. Functionally, peptidoglycan polymerase that catalyzes glycan chain elongation from lipid-linked precursors. This chain is Biosynthetic peptidoglycan transglycosylase, found in Rhizobium leguminosarum bv. trifolii (strain WSM2304).